A 198-amino-acid polypeptide reads, in one-letter code: MAYPGHPGAGGGYYPGGYGGAPGGPAFPGQTQDPLYGYFAAVAGQDGQIDADELQRCLTQSGIAGGYKPFNLETCRLMVSMLDRDMSGTMGFNEFKELWAVLNGWRQHFISFDTDRSGTVDPQELQKALTTMGFRLSPQAVNSIAKRYSTNGKITFDDYIACCVKLRALTDSFRRRDTAQQGVVNFPYDDFIQCVMSV.

4 consecutive EF-hand domains span residues 29–64 (GQTQ…SGIA), 70–103 (FNLE…AVLN), 100–135 (AVLN…MGFR), and 134–169 (FRLS…LRAL). Residues aspartate 83, aspartate 85, serine 87, threonine 89, glutamate 94, aspartate 113, aspartate 115, serine 117, threonine 119, and glutamate 124 each coordinate Ca(2+).

In terms of assembly, homodimer. Interacts with GCA, RYR2 and ANXA7. In terms of tissue distribution, detected in cardiac myocytes.

The protein resides in the cytoplasm. It localises to the sarcoplasmic reticulum membrane. Calcium-binding protein that modulates excitation-contraction coupling in the heart. Contributes to calcium homeostasis in the heart sarcoplasmic reticulum. Modulates the activity of RYR2 calcium channels. This Homo sapiens (Human) protein is Sorcin (SRI).